The chain runs to 83 residues: Large ribosomal subunit protein bL27 (83 aa).

This sequence belongs to the bacterial ribosomal protein bL27 family.

This Thermotoga maritima (strain ATCC 43589 / DSM 3109 / JCM 10099 / NBRC 100826 / MSB8) protein is Large ribosomal subunit protein bL27 (rpmA).